Here is a 71-residue protein sequence, read N- to C-terminus: MPVIKVRENEPFDVALRRFKRSCEKAGILSEVRRREHFEKPTTVRKRAKAAAVKRHLKKLARENARRVRLY.

Belongs to the bacterial ribosomal protein bS21 family.

This Photobacterium profundum (strain SS9) protein is Small ribosomal subunit protein bS21.